The chain runs to 448 residues: DNA primase DnaG (448 aa).

One can recognise a Toprim domain in the interval 186-260 (DSIIVVEGRN…EADFVARAPP (75 aa)). The Mg(2+) site is built by glutamate 192, aspartate 234, and aspartate 236. A disordered region spans residues 318–340 (AEVIEEPPEQPPKNEEIREEQSQ). Over residues 329 to 338 (PKNEEIREEQ) the composition is skewed to basic and acidic residues.

The protein belongs to the archaeal DnaG primase family. In terms of assembly, forms a ternary complex with MCM helicase and DNA. Component of the archaeal exosome complex. Requires Mg(2+) as cofactor.

The enzyme catalyses ssDNA + n NTP = ssDNA/pppN(pN)n-1 hybrid + (n-1) diphosphate.. RNA polymerase that catalyzes the synthesis of short RNA molecules used as primers for DNA polymerase during DNA replication. Also part of the exosome, which is a complex involved in RNA degradation. Acts as a poly(A)-binding protein that enhances the interaction between heteromeric, adenine-rich transcripts and the exosome. This is DNA primase DnaG from Thermoplasma acidophilum (strain ATCC 25905 / DSM 1728 / JCM 9062 / NBRC 15155 / AMRC-C165).